Here is a 445-residue protein sequence, read N- to C-terminus: COP9 signalosome complex subunit 3 (445 aa).

The region spanning 217–381 is the PCI domain; sequence RALYFFEVCI…GMVLFKDDPE (165 aa). The interval 426–445 is disordered; the sequence is SQDDDLTSQHPKTFSGDPTD. Residues 433–445 show a composition bias toward polar residues; sequence SQHPKTFSGDPTD.

The protein belongs to the CSN3 family. As to quaternary structure, component of the CSN complex, probably composed of CSN1b, alien/CSN2, CSN3, CSN4, CSN5, CSN6, CSN7 and CSN8.

Its subcellular location is the cytoplasm. It is found in the nucleus. Functionally, component of the COP9 signalosome complex (CSN), a complex involved in various cellular and developmental processes. The CSN complex is an essential regulator of the ubiquitin (Ubl) conjugation pathway by mediating the deneddylation of the cullin subunits of the SCF-type E3 ligase complexes, leading to decrease the Ubl ligase activity of SCF. The CSN complex plays an essential role in oogenesis and embryogenesis and is required for proper photoreceptor R cell differentiation and promote lamina glial cell migration or axon targeting. It also promotes Ubl-dependent degradation of cyclin E (CycE) during early oogenesis. The protein is COP9 signalosome complex subunit 3 (CSN3) of Drosophila melanogaster (Fruit fly).